Here is a 123-residue protein sequence, read N- to C-terminus: Thioredoxin domain-containing protein 17 (123 aa).

Ala-2 carries the post-translational modification N-acetylalanine. Positions 41–123 constitute a Thioredoxin domain; the sequence is SWCPDCVEAE…SLVEMIFSED (83 aa). Active-site nucleophile residues include Cys-43 and Cys-46. A disulfide bond links Cys-43 and Cys-46.

It belongs to the thioredoxin family. Interacts with TRXR1 and DYNLL1/DNCL1. In terms of processing, the oxidized protein is reduced by TRXR1.

The protein localises to the cytoplasm. Disulfide reductase. May participate in various redox reactions through the reversible oxidation of its active center dithiol to a disulfide and catalyze dithiol-disulfide exchange reactions. Modulates TNF-alpha signaling and NF-kappa-B activation. Has peroxidase activity and may contribute to the elimination of cellular hydrogen peroxide. The chain is Thioredoxin domain-containing protein 17 (Txndc17) from Mus musculus (Mouse).